The sequence spans 32 residues: Cytochrome b6-f complex subunit 6 (32 aa).

Residues I4 to T26 traverse the membrane as a helical segment.

Belongs to the PetL family. The 4 large subunits of the cytochrome b6-f complex are cytochrome b6, subunit IV (17 kDa polypeptide, PetD), cytochrome f and the Rieske protein, while the 4 small subunits are PetG, PetL, PetM and PetN. The complex functions as a dimer.

The protein localises to the plastid. It is found in the chloroplast thylakoid membrane. Functionally, component of the cytochrome b6-f complex, which mediates electron transfer between photosystem II (PSII) and photosystem I (PSI), cyclic electron flow around PSI, and state transitions. PetL is important for photoautotrophic growth as well as for electron transfer efficiency and stability of the cytochrome b6-f complex. The sequence is that of Cytochrome b6-f complex subunit 6 from Tetradesmus obliquus (Green alga).